The primary structure comprises 654 residues: Dystrobrevin beta (654 aa).

M1 is subject to N-acetylmethionine. Phosphothreonine is present on residues T11, T69, T179, and T212. Residues 238–294 form a ZZ-type zinc finger; the sequence is FHPVECSYCHCESMMGFRYRCQQCHNYQLCQNCFWRGHAGGPHSNQHQMKELSSWKS. Zn(2+) contacts are provided by C243, C246, C258, C261, C267, C270, H280, and H284. S394 carries the phosphoserine modification. Residues 399–448 form a syntrophin-binding region region; it reads DEEHRLIARYAARLAAEAGNMTRPPTDASFNFDANKQQRQLIAELENKNR. Residue T424 is modified to Phosphothreonine. Residues 429 to 519 are a coiled coil; sequence NFDANKQQRQ…LEGLMKLLKA (91 aa). Residues 520–562 are disordered; it reads QATGSPHTSPTHGGGRSMPMPVRSTSAGSTPTHGPQDSLSGVG. Polar residues-rich tracts occupy residues 521–530 and 542–558; these read ATGSPHTSPT and RSTSAGSTPTHGPQDSL.

The protein belongs to the dystrophin family. Dystrobrevin subfamily. In terms of assembly, interacts with dystrophin short form DP71 and syntrophins SNTG1 and SNTG2. Binds DTNBP1. Forms a specific complex composed of DMD, SNTB2 and SNTA1 in neuron; the interaction with SNTB2 and SNTA1 is DMD independent. Interacts with UTRN and dystrophin short form DP71 in the kidney and liver. Interacts with SNTB1, SNTB2 and SNTA1 in kidney and liver. Interacts with KIF5A. Interacts with HMG20A and HMG20B. Interacts with OLFM1. Interacts with PRKAR2B and PRKAR1A. In terms of processing, phosphorylated by PKA. Phosphorylation at Thr-11 alters the interaction with KIF5A. In terms of tissue distribution, expressed in neurons. In the isocortex, expressed most prominently in the somata (including the nuclei) and the dendrites of the pyramidal cells. Expressed in the hippocampus CA1, CA2, and CA3 neurons, namely in the initial segments of dendrites. Expressed in the Purkinje cells, molecular layer interneurons, and granule cells of cerebellum. Expressed in axon fascicles associated with the spinal trigeminal tract and in the internal capsule in the brainstem.

Its subcellular location is the cytoplasm. The protein resides in the postsynaptic density. It localises to the cell projection. It is found in the dendrite. The protein localises to the basal cell membrane. Its subcellular location is the postsynapse. The protein resides in the nucleus. Its function is as follows. Scaffolding protein that assembles DMD and SNTA1 molecules to the basal membrane of kidney cells and liver sinusoids. May function as a repressor of the SYN1 promoter through the binding of repressor element-1 (RE-1), in turn regulates SYN1 expression and may be involved in cell proliferation regulation during the early phase of neural differentiation. May be required for proper maturation and function of a subset of inhibitory synapses. The protein is Dystrobrevin beta of Rattus norvegicus (Rat).